A 130-amino-acid chain; its full sequence is Small ribosomal subunit protein uS9 (130 aa).

Belongs to the universal ribosomal protein uS9 family.

This Xylella fastidiosa (strain 9a5c) protein is Small ribosomal subunit protein uS9.